The following is a 255-amino-acid chain: Sec-independent protein translocase protein TatC (255 aa).

Helical transmembrane passes span 28 to 48 (VAAVLLIFAALFYFAQDIYAL), 56 to 76 (YLPEGATMIATGVASPFLAPF), 80 to 100 (LMISLFLAMPVVLHQVWGFIA), 121 to 141 (LFYAGMAFAYFVVFPIMFGFF), 165 to 185 (LFFAFGVAFEVPVATFLLIWV), 195 to 212 (NSRPYVIVGCFVVGMVLT), and 216 to 236 (VFSQTLLAVPMWLLFEIGVFF).

This sequence belongs to the TatC family. As to quaternary structure, the Tat system comprises two distinct complexes: a TatABC complex, containing multiple copies of TatA, TatB and TatC subunits, and a separate TatA complex, containing only TatA subunits. Substrates initially bind to the TatABC complex, which probably triggers association of the separate TatA complex to form the active translocon.

It localises to the cell membrane. Part of the twin-arginine translocation (Tat) system that transports large folded proteins containing a characteristic twin-arginine motif in their signal peptide across membranes. Together with TatB, TatC is part of a receptor directly interacting with Tat signal peptides. This is Sec-independent protein translocase protein TatC from Azotobacter chroococcum mcd 1.